The sequence spans 157 residues: 2-C-methyl-D-erythritol 2,4-cyclodiphosphate synthase (157 aa).

Residues Asp8 and His10 each contribute to the a divalent metal cation site. Residues Asp8–His10 and His34–Ser35 each bind 4-CDP-2-C-methyl-D-erythritol 2-phosphate. An a divalent metal cation-binding site is contributed by His42. Residues Asp56–Gly58, Thr132–Glu135, and Arg142 each bind 4-CDP-2-C-methyl-D-erythritol 2-phosphate.

The protein belongs to the IspF family. As to quaternary structure, homotrimer. The cofactor is a divalent metal cation.

The catalysed reaction is 4-CDP-2-C-methyl-D-erythritol 2-phosphate = 2-C-methyl-D-erythritol 2,4-cyclic diphosphate + CMP. Its pathway is isoprenoid biosynthesis; isopentenyl diphosphate biosynthesis via DXP pathway; isopentenyl diphosphate from 1-deoxy-D-xylulose 5-phosphate: step 4/6. In terms of biological role, involved in the biosynthesis of isopentenyl diphosphate (IPP) and dimethylallyl diphosphate (DMAPP), two major building blocks of isoprenoid compounds. Catalyzes the conversion of 4-diphosphocytidyl-2-C-methyl-D-erythritol 2-phosphate (CDP-ME2P) to 2-C-methyl-D-erythritol 2,4-cyclodiphosphate (ME-CPP) with a corresponding release of cytidine 5-monophosphate (CMP). In Chlorobaculum tepidum (strain ATCC 49652 / DSM 12025 / NBRC 103806 / TLS) (Chlorobium tepidum), this protein is 2-C-methyl-D-erythritol 2,4-cyclodiphosphate synthase.